The following is a 384-amino-acid chain: Kinesin-like protein KIF25 (384 aa).

A disordered region spans residues 1-20; it reads MTWTSGQLQREKQARPGSGA. The Kinesin motor domain maps to 7 to 363; that stretch reads QLQREKQARP…LGFGIRARQV (357 aa). 65 to 72 contributes to the ATP binding site; the sequence is GQTGSGKS. Disordered regions lie at residues 217 to 256 and 362 to 384; these read DQACSATLPREQTEAGRAGRSRRASQGALAPQLVPGNPAG and QVQRGPARKKPPSSQTEGKRRPD.

It belongs to the TRAFAC class myosin-kinesin ATPase superfamily. Kinesin family. In terms of assembly, homotetramer.

Its subcellular location is the cytoplasm. The protein localises to the cytoskeleton. It is found in the microtubule organizing center. It localises to the centrosome. Minus-end microtubule-dependent motor protein. Acts as a negative regulator of centrosome separation required to prevent premature centrosome separation during interphase. Required to maintain a centered nucleus to ensure that the spindle is stably oriented at the onset of mitosis. May also act as a negative regulator of amino acid starvation-induced autophagy. This is Kinesin-like protein KIF25 from Homo sapiens (Human).